A 461-amino-acid chain; its full sequence is Argininosuccinate lyase (461 aa).

Belongs to the lyase 1 family. Argininosuccinate lyase subfamily.

It is found in the cytoplasm. It catalyses the reaction 2-(N(omega)-L-arginino)succinate = fumarate + L-arginine. Its pathway is amino-acid biosynthesis; L-arginine biosynthesis; L-arginine from L-ornithine and carbamoyl phosphate: step 3/3. The chain is Argininosuccinate lyase from Dehalococcoides mccartyi (strain CBDB1).